A 233-amino-acid polypeptide reads, in one-letter code: Achaete-scute homolog 1 (233 aa).

2 disordered regions span residues 1–24 (MESS…FLPP) and 39–95 (AAAA…ELMR). The span at 39–62 (AAAAAAQSAQQQQQQQAPQQQAPQ) shows a compositional bias: low complexity. Over residues 78–87 (SAAKQVKRQR) the composition is skewed to basic residues. One can recognise a bHLH domain in the interval 115–167 (AAVARRNERERNRVKLVNLGFATLREHVPNGAANKKMSKVETLRSAVEYIRAL). Lysine 153 is subject to N6-acetyllysine.

As to quaternary structure, efficient DNA binding requires dimerization with another bHLH protein. Forms a heterodimer with TCF3. In terms of tissue distribution, developing CNS and PNS at embryonic and postnatal stages.

It is found in the nucleus. Its function is as follows. Transcription factor that plays a key role in neuronal differentiation: acts as a pioneer transcription factor, accessing closed chromatin to allow other factors to bind and activate neural pathways. Directly binds the E box motif (5'-CANNTG-3') on promoters and promotes transcription of neuronal genes. The combination of three transcription factors, ASCL1, POU3F2/BRN2 and MYT1L, is sufficient to reprogram fibroblasts and other somatic cells into induced neuronal (iN) cells in vitro. Plays a role at early stages of development of specific neural lineages in most regions of the CNS, and of several lineages in the PNS. Essential for the generation of olfactory and autonomic neurons. Acts synergistically with FOXN4 to specify the identity of V2b neurons rather than V2a from bipotential p2 progenitors during spinal cord neurogenesis, probably through DLL4-NOTCH signaling activation. Involved in the regulation of neuroendocrine cell development in the glandular stomach. In Rattus norvegicus (Rat), this protein is Achaete-scute homolog 1 (Ascl1).